Reading from the N-terminus, the 76-residue chain is Small ribosomal subunit protein bS18 (76 aa).

This sequence belongs to the bacterial ribosomal protein bS18 family. As to quaternary structure, part of the 30S ribosomal subunit. Forms a tight heterodimer with protein bS6.

Its function is as follows. Binds as a heterodimer with protein bS6 to the central domain of the 16S rRNA, where it helps stabilize the platform of the 30S subunit. This Desulfitobacterium hafniense (strain Y51) protein is Small ribosomal subunit protein bS18.